A 776-amino-acid chain; its full sequence is Protein translocase subunit SecA 2 (776 aa).

Residues Gln80, 98-102 (GEGKT), and Asp486 each bind ATP.

This sequence belongs to the SecA family. As to quaternary structure, monomer and homodimer. Part of the essential Sec protein translocation apparatus which comprises SecA, SecYEG and auxiliary proteins SecDF. Other proteins may also be involved.

It is found in the cell membrane. Its subcellular location is the cytoplasm. The catalysed reaction is ATP + H2O + cellular proteinSide 1 = ADP + phosphate + cellular proteinSide 2.. In terms of biological role, part of the Sec protein translocase complex. Interacts with the SecYEG preprotein conducting channel. Has a central role in coupling the hydrolysis of ATP to the transfer of proteins into and across the cell membrane, serving as an ATP-driven molecular motor driving the stepwise translocation of polypeptide chains across the membrane. The polypeptide is Protein translocase subunit SecA 2 (Listeria monocytogenes serovar 1/2a (strain ATCC BAA-679 / EGD-e)).